Reading from the N-terminus, the 152-residue chain is Putative toxin MJ1304 (152 aa).

The HEPN domain occupies 15–135 (IKRAEEDLEV…EECLKDAENV (121 aa)).

Putative toxin component of a putative type VII toxin-antitoxin (TA) system. Its cognate antitoxin might be MJ1305. The protein is Putative toxin MJ1304 of Methanocaldococcus jannaschii (strain ATCC 43067 / DSM 2661 / JAL-1 / JCM 10045 / NBRC 100440) (Methanococcus jannaschii).